A 107-amino-acid chain; its full sequence is Nucleoid-associated protein XF_1808 (107 aa).

The protein belongs to the YbaB/EbfC family. As to quaternary structure, homodimer.

It is found in the cytoplasm. It localises to the nucleoid. In terms of biological role, binds to DNA and alters its conformation. May be involved in regulation of gene expression, nucleoid organization and DNA protection. This chain is Nucleoid-associated protein XF_1808, found in Xylella fastidiosa (strain 9a5c).